The chain runs to 380 residues: MTIIRKKHPLIKLINHSFIDLPTPSNISSWWNFGSLLGLCLMIQILTGLFLAMHYTSDTTTAFSSVAHICRDVNYGWLIRYMHANGASMFFICLFLHVGRGVYYGSYNMIETWNMGIVLLFAVMATAFMGYVLPWGQMSFWGATVITNLLSAIPYIGTTLVEWIWGGFSVDKATLTRFFAFHFILPFIITALVLVHLLFLHETGSNNPSGLNSDADKIPFHPYYTIKDLLGALLLLTALMILVLFFPDILGDPDNYTPANPLNTPPHIKPEWYFLFAYAILRSIPNKLGGVLALILSILILAFMPLLHTSKQRGITFRPITQTMYWILVSDLLILTWIGGQPVEYPFIMIGQVASITYFAIIVIFMPIAGIIENNILGLD.

The next 4 helical transmembrane spans lie at 33-53 (FGSLLGLCLMIQILTGLFLAM), 77-98 (WLIRYMHANGASMFFICLFLHV), 113-133 (WNMGIVLLFAVMATAFMGYVL), and 178-198 (FFAFHFILPFIITALVLVHLL). Heme b-binding residues include His83 and His97. Residues His182 and His196 each contribute to the heme b site. Position 201 (His201) interacts with a ubiquinone. The next 4 membrane-spanning stretches (helical) occupy residues 226–246 (IKDLLGALLLLTALMILVLFF), 288–308 (LGGVLALILSILILAFMPLLH), 320–340 (ITQTMYWILVSDLLILTWIGG), and 347–367 (FIMIGQVASITYFAIIVIFMP).

Belongs to the cytochrome b family. The cytochrome bc1 complex contains 11 subunits: 3 respiratory subunits (MT-CYB, CYC1 and UQCRFS1), 2 core proteins (UQCRC1 and UQCRC2) and 6 low-molecular weight proteins (UQCRH/QCR6, UQCRB/QCR7, UQCRQ/QCR8, UQCR10/QCR9, UQCR11/QCR10 and a cleavage product of UQCRFS1). This cytochrome bc1 complex then forms a dimer. Heme b serves as cofactor.

The protein localises to the mitochondrion inner membrane. Its function is as follows. Component of the ubiquinol-cytochrome c reductase complex (complex III or cytochrome b-c1 complex) that is part of the mitochondrial respiratory chain. The b-c1 complex mediates electron transfer from ubiquinol to cytochrome c. Contributes to the generation of a proton gradient across the mitochondrial membrane that is then used for ATP synthesis. This Synaptomys borealis (Northern bog lemming) protein is Cytochrome b (MT-CYB).